The primary structure comprises 474 residues: UDP-N-acetylmuramate--L-alanine ligase (474 aa).

123–129 provides a ligand contact to ATP; sequence GTHGKTT.

Belongs to the MurCDEF family.

It localises to the cytoplasm. It catalyses the reaction UDP-N-acetyl-alpha-D-muramate + L-alanine + ATP = UDP-N-acetyl-alpha-D-muramoyl-L-alanine + ADP + phosphate + H(+). The protein operates within cell wall biogenesis; peptidoglycan biosynthesis. Functionally, cell wall formation. The protein is UDP-N-acetylmuramate--L-alanine ligase of Alcanivorax borkumensis (strain ATCC 700651 / DSM 11573 / NCIMB 13689 / SK2).